A 54-amino-acid chain; its full sequence is Ribulose bisphosphate carboxylase large chain (54 aa).

Residues 1-2 (MS) constitute a propeptide that is removed on maturation. An N-acetylproline modification is found at P3. K14 carries the post-translational modification N6,N6,N6-trimethyllysine.

It belongs to the RuBisCO large chain family. Type I subfamily. As to quaternary structure, heterohexadecamer of 8 large chains and 8 small chains.

It localises to the plastid. The protein localises to the chloroplast. It catalyses the reaction 2 (2R)-3-phosphoglycerate + 2 H(+) = D-ribulose 1,5-bisphosphate + CO2 + H2O. It carries out the reaction D-ribulose 1,5-bisphosphate + O2 = 2-phosphoglycolate + (2R)-3-phosphoglycerate + 2 H(+). Functionally, ruBisCO catalyzes two reactions: the carboxylation of D-ribulose 1,5-bisphosphate, the primary event in carbon dioxide fixation, as well as the oxidative fragmentation of the pentose substrate in the photorespiration process. Both reactions occur simultaneously and in competition at the same active site. This is Ribulose bisphosphate carboxylase large chain (rbcL) from Ilex aquifolium (English holly).